The sequence spans 441 residues: MMKSILALVLGTLSFAALADDQANDALVKRGEYLARAGDCVACHSVKGGQPFAGGLPMATPIGTIYSTNITPDKTTGIGDYSYDDFQKAVRHGVAKNGDTLYPAMPYPSYAVVSDEDMKALYAYFMHGVAPVAQANKDSDIPWPLSMRWPLAIWRGVFAPDVKAFQPAAQEDPVLARGRYLVEGLGHCGACHTPRSITMQEKALSNDGAHDYLSGSSAPIDGWTASNLRGDNRDGLGRWSEDDLRQFLRYGRNDHTAAFGGMTDVVEHSLQHLSDDDITAIARYLKSLGAKDASQTVFTQDDQVAKALWKGDDSQTGASVYVDSCAACHKTDGSRLSALLPGAAWQPGGAGEPDPTSLIHIVLTGGTLPGVQGAPTAITMPAFGWRLNDQQVADVVNFIRGSWGNGAKATVTAKDVASLRKDETVQAHQGNADIKVLEQQQ.

A signal peptide spans 1-19 (MMKSILALVLGTLSFAALA). Cytochrome c domains lie at 26-129 (ALVK…MHGV), 173-289 (PVLA…KSLG), and 312-403 (DDSQ…RGSW). The heme c site is built by Cys-40, Cys-43, His-44, Cys-188, Cys-191, His-192, Cys-325, Cys-328, and His-329.

In terms of assembly, heterotrimer. FAD serves as cofactor. In terms of processing, binds 3 heme c groupd covalently per subunit.

It localises to the cell membrane. The enzyme catalyses D-gluconate + A = 2-dehydro-D-gluconate + AH2. In terms of biological role, part of the heterotrimer that catalyzes the conversion of D-gluconate to 2-dehydro-D-gluconate. This chain is Gluconate 2-dehydrogenase cytochrome c subunit, found in Pantoea cypripedii (Pectobacterium cypripedii).